We begin with the raw amino-acid sequence, 340 residues long: Tetraacyldisaccharide 4'-kinase (340 aa).

Position 50–57 (His-50–Thr-57) interacts with ATP.

Belongs to the LpxK family.

The catalysed reaction is a lipid A disaccharide + ATP = a lipid IVA + ADP + H(+). Its pathway is glycolipid biosynthesis; lipid IV(A) biosynthesis; lipid IV(A) from (3R)-3-hydroxytetradecanoyl-[acyl-carrier-protein] and UDP-N-acetyl-alpha-D-glucosamine: step 6/6. Its function is as follows. Transfers the gamma-phosphate of ATP to the 4'-position of a tetraacyldisaccharide 1-phosphate intermediate (termed DS-1-P) to form tetraacyldisaccharide 1,4'-bis-phosphate (lipid IVA). The sequence is that of Tetraacyldisaccharide 4'-kinase from Rhodopseudomonas palustris (strain BisA53).